A 677-amino-acid chain; its full sequence is Pannexin-2 (677 aa).

The Cytoplasmic portion of the chain corresponds to 11-47; that stretch reads MATALLAGEKLRELILPGAQDDKAGALAALLLQLKLE. The helical transmembrane segment at 48–70 threads the bilayer; it reads LPFDRVVTIGTVLVPILLVTLVF. Residues 71-123 are Extracellular-facing; that stretch reads TKNFAEEPIYCYTPHNFTRDQALYARGYCWTELRDALPGVDASLWPSLFEHKF. Residue Asn-86 is glycosylated (N-linked (GlcNAc...) asparagine). A helical membrane pass occupies residues 124-146; that stretch reads LPYALLAFAAIMYVPALGWEFLA. At 147 to 226 the chain is on the cytoplasmic side; the sequence is STRLTSELNF…RGRSNFLAKL (80 aa). The helical transmembrane segment at 227–249 threads the bilayer; sequence YLARHVLILLLSAVPISYLCTYY. Residues 250 to 292 lie on the Extracellular side of the membrane; the sequence is ATQKQNEFTCALGASPDGAAGAGPAVRVSCKLPSVQLQRIIAG. Residues 293 to 315 form a helical membrane-spanning segment; that stretch reads VDIVLLCVMNLIILVNLIHLFIF. Residues 316-643 lie on the Cytoplasmic side of the membrane; sequence RKSNFIFDKL…AREEEDGGPR (328 aa). Disordered regions lie at residues 393-423 and 454-510; these read ATPT…PPVV and NSKA…KKHA. The span at 492–504 shows a compositional bias: pro residues; the sequence is GPGPAPAPAPPPA. Ser-593 is subject to Phosphoserine.

It belongs to the pannexin family. Homoheptameric. Post-translationally, S-palmitoylated in neural stem and progenitor cells. Cleaved by CASP3 and CASP7 during apoptosis. Cleavage has no effect on it function.

The protein localises to the cell membrane. Its subcellular location is the golgi apparatus membrane. It is found in the endoplasmic reticulum membrane. The enzyme catalyses ATP(in) = ATP(out). It carries out the reaction chloride(in) = chloride(out). It catalyses the reaction iodide(out) = iodide(in). The catalysed reaction is Na(+)(in) = Na(+)(out). The enzyme catalyses D-gluconate(in) = D-gluconate(out). Ion channel with a slight anion preference. Also able to release ATP. Plays a role in regulating neurogenesis and apoptosis in keratinocytes. In Homo sapiens (Human), this protein is Pannexin-2.